The chain runs to 476 residues: Protein DETOXIFICATION 4 (476 aa).

The next 12 membrane-spanning stretches (helical) occupy residues 35-55 (AVPMATVTIAQYLLPVISVMV), 66-86 (GVALATSFTNVSGFSIMFGLV), 117-137 (IPICVLISILWIYMEKLLISL), 154-174 (LIPTLFAHAIVLPLTRFLLAQ), 176-196 (LVLPLLYFALTTLLFHIAVCW), 208-228 (GAALAISVSFWFFAMTLSCYV), 260-280 (AAMLCLEWWLFELLILCSGLL), 289-309 (VLSICLTTATLHYVIPVGVAA), 332-352 (LAGLCLWLVESSFFSILLFAF), 370-390 (VADLSPLLCLSFVLDGFTAVL), 408-428 (VVAYYLVGAPVGIYLAFSCEL), and 433-453 (LWCGVVVGSAVQAIILAIVTA).

This sequence belongs to the multi antimicrobial extrusion (MATE) (TC 2.A.66.1) family.

It localises to the membrane. The protein is Protein DETOXIFICATION 4 of Arabidopsis thaliana (Mouse-ear cress).